A 207-amino-acid chain; its full sequence is MVADNSEKSTKSVANGSLISTVSSKDDLPNAIIVTQVPEDVFDNKQDKANFSSLFTQIEKDIHFDFLRSFRRVRVIFSSPENATAAKLIVQGFSFKGHELKAFFAQRIYMSANSQMLSPPPLEKQFLISPPCSPPVGWEQTKDMPPVVCNFDLMARLASFAIDEKYEVHNGDELTPAIIVHPCETPIDVPSAIEMPRTPRPSSPCEQ.

The interval proline 176–histidine 181 is required for tax-6 interaction.

The protein belongs to the RCAN family. Interacts with tax-6 (via catalytic domain); the interaction is calcium-dependent. Expressed in lateral hypodermal cells, marginal cells of the pharynx, vulva epithelial cells, ventral and dorsal nerve cords and commissures and various neurons in the anterior and posterior regions. Expressed in male tail structures including the diagonal muscles, sensory rays and spicules. Expressed in PHC neurons and most tail neurons and support cells of the phasmid neurons. Also expressed in pharyngeal muscle, head neurons, excretory canal cells and hypodermal seam cells.

Functionally, inhibits tax-6/calcineurin A phosphatase activity and thereby negatively regulates calcineurin-mediated functions. Plays a role in modulating temperature-dependent calcium responses in AFD neurons and in addition, also negatively regulates thermotaxis in a tax-6-dependent manner in AFD neurons. In response to changes in intracellular calcium levels may also regulate nuclear translocation of transcriptional regulators such as crtc-1. May play a role in regulating body size. Plays a role in male tail tip morphogenesis. The protein is Calcipressin-like protein of Caenorhabditis elegans.